Reading from the N-terminus, the 127-residue chain is uncharacterized protein (127 aa).

The helical transmembrane segment at 5-25 (ILGITIAFIILLLTTVAILFS) threads the bilayer.

The protein localises to the membrane. This is an uncharacterized protein from Mycoplasma genitalium (strain ATCC 33530 / DSM 19775 / NCTC 10195 / G37) (Mycoplasmoides genitalium).